The primary structure comprises 487 residues: L-tartrate/succinate antiporter (487 aa).

The next 14 membrane-spanning stretches (helical) occupy residues 10 to 30 (YLAP…AGLE), 33 to 53 (TWLY…EPVP), 54 to 74 (GAVV…WLLF), 93 to 113 (WAVS…FMFG), 137 to 157 (TLFL…VTPS), 189 to 209 (IGSY…AIFL), 230 to 250 (LSWG…VLLV), 292 to 312 (LMVG…AAMV), 313 to 333 (GYSV…DIVS), 340 to 360 (VFFW…TGFI), 370 to 390 (SLSG…FYLL), 393 to 413 (FFAS…AAAL), 418 to 438 (IPLP…SILT), and 465 to 485 (IFGL…MPVV).

It belongs to the SLC13A/DASS transporter (TC 2.A.47) family. DIT1 subfamily.

It localises to the cell inner membrane. It carries out the reaction (2R,3R)-tartrate(out) + succinate(in) = (2R,3R)-tartrate(in) + succinate(out). Functionally, catalyzes the uptake of tartrate in exchange for intracellular succinate. Essential for anaerobic L-tartrate fermentation. In Shigella dysenteriae serotype 1 (strain Sd197), this protein is L-tartrate/succinate antiporter (ttdT).